The primary structure comprises 518 residues: Putative succinate-semialdehyde dehydrogenase [NADP(+)] 2 (518 aa).

Residues 157–158 (WN), 181–184 (KPDS), and 232–233 (GS) contribute to the NADP(+) site. Glutamate 254 (proton acceptor) is an active-site residue. Leucine 255 is an NADP(+) binding site. Catalysis depends on cysteine 288, which acts as the Nucleophile. Position 386 (glutamate 386) interacts with NADP(+).

This sequence belongs to the aldehyde dehydrogenase family.

It carries out the reaction succinate semialdehyde + NADP(+) + H2O = succinate + NADPH + 2 H(+). Functionally, catalyzes the NADP(+)-dependent oxidation of succinate semialdehyde to succinate. Although it has succinate semialdehyde dehydrogenase activity, is likely to act physiologically on a different aldehyde(s). This Mycobacterium bovis (strain ATCC BAA-935 / AF2122/97) protein is Putative succinate-semialdehyde dehydrogenase [NADP(+)] 2 (gabD2).